Consider the following 1116-residue polypeptide: Ubiquitin C-terminal hydrolase 12 (1116 aa).

Over residues 1 to 10 (MTMMTPPPVD) the composition is skewed to pro residues. The disordered stretch occupies residues 1-52 (MTMMTPPPVDQPEDEEMLVPNSDLVDGPAQPMEVTQPETAASTVENQPAEDP). A compositionally biased stretch (polar residues) spans 36–46 (QPETAASTVEN). The 126-residue stretch at 54–179 (TLKFTWTIPN…NDTVLVEAEV (126 aa)) folds into the MATH domain. The 326-residue stretch at 199 to 524 (VGLKNQGATC…NAYMLVYIRE (326 aa)) folds into the USP domain. The Nucleophile role is filled by Cys-208. Residue His-455 is the Proton acceptor of the active site.

Belongs to the peptidase C19 family. Interacts with SIC/RON3.

It catalyses the reaction Thiol-dependent hydrolysis of ester, thioester, amide, peptide and isopeptide bonds formed by the C-terminal Gly of ubiquitin (a 76-residue protein attached to proteins as an intracellular targeting signal).. Recognizes and hydrolyzes the peptide bond at the C-terminal Gly of ubiquitin. Involved in the processing of poly-ubiquitin precursors as well as that of ubiquitinated proteins. Positive regulator of root meristem development that, together with UBP13, prevents the ubiquitination and turnover of RGFR1 induced by the RGF1 hormone peptide, thus influencing PLT1 and PLT2 expression. The sequence is that of Ubiquitin C-terminal hydrolase 12 from Arabidopsis thaliana (Mouse-ear cress).